The sequence spans 1080 residues: MPAKGRYFLNEGEEGPDQDALYEKYQLTSQHGPLLLTLLLVAATACVALIIIAFSQGDPSRHQAILGMAFLVLAVFAALSVLMYVECLLRRWLRALALLTWACLVALGYVLVFDAWTKAACAWEQVPFFLFIVFVVYTLLPFSMRGAVAVGAVSTASHLLVLGSLMGGFTTPSVRVGLQLLANAVIFLCGNLTGAFHKHQMQDASRDLFTYTVKCIQIRRKLRIEKRQQENLLLSVLPAHISMGMKLAIIERLKEHGDRRCMPDNNFHSLYVKRHQNVSILYADIVGFTQLASDCSPKELVVVLNELFGKFDQIAKANECMRIKILGDCYYCVSGLPVSLPTHARNCVKMGLDMCQAIKQVREATGVDINMRVGIHSGNVLCGVIGLRKWQYDVWSHDVSLANRMEAAGVPGRVHITEATLKHLDKAYEVEDGHGQQRDPYLKEMNIRTYLVIDPRSQQPPPPSQHLPRPKGDAALKMRASVRMTRYLESWGAARPFAHLNHRESVSSGETHVPNGRRPKSVPQRHRRTPDRSMSPKGRSEDDSYDDEMLSAIEGLSSTRPCCSKSDDFYTFGSIFLEKGFEREYRLAPIPRARHDFACASLIFVCILLVHVLLMPRTAALGVSFGLVACVLGLVLGLCFATKFSRCCPARGTLCTISERVETQPLLRLTLAVLTIGSLLTVAIINLPLMPFQVPELPVGNETGLLAASSKTRALCEPLPYYTCSCVLGFIACSVFLRMSLEPKVVLLTVALVAYLVLFNLSPCWQWDCCGQGLGNLTKPNGTTSGTPSCSWKDLKTMTNFYLVLFYITLLTLSRQIDYYCRLDCLWKKKFKKEHEEFETMENVNRLLLENVLPAHVAAHFIGDKLNEDWYHQSYDCVCVMFASVPDFKVFYTECDVNKEGLECLRLLNEIIADFDELLLKPKFSGVEKIKTIGSTYMAAAGLSVASGHENQELERQHAHIGVMVEFSIALMSKLDGINRHSFNSFRLRVGINHGPVIAGVIGARKPQYDIWGNTVNVASRMESTGELGKIQVTEETCTILQGLGYSCECRGLINVKGKGELRTYFVCTDTAKFQGLGLN.

The Cytoplasmic portion of the chain corresponds to 1-33 (MPAKGRYFLNEGEEGPDQDALYEKYQLTSQHGP). 6 consecutive transmembrane segments (helical) span residues 34–54 (LLLTLLLVAATACVALIIIAF), 63–83 (QAILGMAFLVLAVFAALSVLM), 95–117 (ALALLTWACLVALGYVLVFDAWT), 122–142 (AWEQVPFFLFIVFVVYTLLPF), 147–167 (AVAVGAVSTASHLLVLGSLMG), and 176–196 (VGLQLLANAVIFLCGNLTGAF). Over 197-594 (HKHQMQDASR…YRLAPIPRAR (398 aa)) the chain is Cytoplasmic. Positions 279–406 (SILYADIVGF…HDVSLANRME (128 aa)) constitute a Guanylate cyclase 1 domain. Positions 284, 285, and 328 each coordinate Mg(2+). ATP contacts are provided by residues 284–289 (DIVGFT), 326–328 (LGD), and arginine 372. Residues 454-474 (DPRSQQPPPPSQHLPRPKGDA) form a disordered region. The segment at 477–482 (KMRASV) is mediates regulation of adenylate cyclase activity by C5 alpha-induced G- beta and gamma pathway. The tract at residues 491-499 (WGAARPFAH) is mediates regulation of adenylate cyclase activity by sphingosine 1-phosphate-induced G alpha 13 pathway. The tract at residues 504–546 (ESVSSGETHVPNGRRPKSVPQRHRRTPDRSMSPKGRSEDDSYD) is disordered. The interval 506–584 (VSSGETHVPN…IFLEKGFERE (79 aa)) is modulates adenylate cyclase activity by modulating the binding of G(s)alpha to the high-affinity G(s)alpha binding site in 7C1a/7C2. Positions 515 to 529 (NGRRPKSVPQRHRRT) are enriched in basic residues. Transmembrane regions (helical) follow at residues 595–615 (HDFACASLIFVCILLVHVLLM), 620–640 (ALGVSFGLVACVLGLVLGLCF), and 669–688 (LTLAVLTIGSLLTVAIINLP). Asparagine 701 carries an N-linked (GlcNAc...) asparagine glycan. The next 2 membrane-spanning stretches (helical) occupy residues 718 to 737 (PLPYYTCSCVLGFIACSVFL) and 746 to 773 (VLLTVALVAYLVLFNLSPCWQWDCCGQG). N-linked (GlcNAc...) asparagine glycans are attached at residues asparagine 776 and asparagine 781. The chain crosses the membrane as a helical span at residues 794-814 (DLKTMTNFYLVLFYITLLTLS). The Cytoplasmic segment spans residues 815-1080 (RQIDYYCRLD…TAKFQGLGLN (266 aa)). One can recognise a Guanylate cyclase 2 domain in the interval 879 to 1023 (CVMFASVPDF…NTVNVASRME (145 aa)). Residues lysine 931, 1010 to 1012 (DIW), 1017 to 1021 (NVASR), and lysine 1057 each bind ATP.

The protein belongs to the adenylyl cyclase class-4/guanylyl cyclase family. The cofactor is Mg(2+). Mn(2+) is required as a cofactor. In terms of processing, phosphorylated by PRKCD.

It is found in the membrane. It carries out the reaction ATP = 3',5'-cyclic AMP + diphosphate. Its activity is regulated as follows. Activated by the G protein alpha subunit. Activated by the G protein beta and gamma subunit complex. Activated by GNA13 and GNA12. Ethanol and phorbol 12,13-dibutanoate significantly potentiate adenylate cyclase activity generated in response to the activation of the prostanoid receptor by the agonist prostaglandin E1(1-) in a PKC-dependent manner. Inhibited by lithium. In terms of biological role, catalyzes the formation of cAMP in response to activation of G protein-coupled receptors. Functions in signaling cascades activated namely by thrombin and sphingosine 1-phosphate and mediates regulation of cAMP synthesis through synergistic action of the stimulatory G alpha protein with GNA13. Also, during inflammation, mediates zymosan-induced increase intracellular cAMP, leading to protein kinase A pathway activation in order to modulate innate immune responses through heterotrimeric G proteins G(12/13). Functions in signaling cascades activated namely by dopamine and C5 alpha chain and mediates regulation of cAMP synthesis through synergistic action of the stimulatory G protein with G beta:gamma complex. Functions, through cAMP response regulation, to keep inflammation under control during bacterial infection by sensing the presence of serum factors, such as the bioactive lysophospholipid (LPA) that regulate LPS-induced TNF-alpha production. However, it is also required for the optimal functions of B and T cells during adaptive immune responses by regulating cAMP synthesis in both B and T cells. The protein is Adenylate cyclase type 7 of Homo sapiens (Human).